The sequence spans 531 residues: UDP-glucuronosyltransferase 2B13 (531 aa).

An N-terminal signal peptide occupies residues Met1–Cys24. 3 N-linked (GlcNAc...) asparagine glycosylation sites follow: Asn69, Asn101, and Asn317. The helical transmembrane segment at Val495–Val511 threads the bilayer.

This sequence belongs to the UDP-glycosyltransferase family.

The protein localises to the microsome membrane. It is found in the endoplasmic reticulum membrane. The enzyme catalyses glucuronate acceptor + UDP-alpha-D-glucuronate = acceptor beta-D-glucuronoside + UDP + H(+). In terms of biological role, UDPGT is of major importance in the conjugation and subsequent elimination of potentially toxic xenobiotics and endogenous compounds. Acts on small phenolic agents such as 2-beta-naphthol and 4-methylumbelliferone as well as bulky phenolic compounds like 2-hydroxy- and 4-hydroxybiphenyl. In contrast to 2B16 it is active toward octylgallate. This chain is UDP-glucuronosyltransferase 2B13 (UGT2B13), found in Oryctolagus cuniculus (Rabbit).